The primary structure comprises 306 residues: Curved DNA-binding protein (306 aa).

Positions 5 to 69 (DYYAIMGVKP…QRRAEYDQMW (65 aa)) constitute a J domain.

It is found in the cytoplasm. The protein localises to the nucleoid. Its function is as follows. DNA-binding protein that preferentially recognizes a curved DNA sequence. It is probably a functional analog of DnaJ; displays overlapping activities with DnaJ, but functions under different conditions, probably acting as a molecular chaperone in an adaptive response to environmental stresses other than heat shock. Lacks autonomous chaperone activity; binds native substrates and targets them for recognition by DnaK. Its activity is inhibited by the binding of CbpM. This is Curved DNA-binding protein from Escherichia coli O8 (strain IAI1).